Consider the following 346-residue polypeptide: Sensor protein kinase GraS (346 aa).

2 helical membrane-spanning segments follow: residues 18–38 (IFWI…DYDF) and 43–63 (LFYI…LTFF). In terms of domain architecture, Histidine kinase spans 126–332 (EFVHDIKTPV…TVKLIFPLQN (207 aa)).

As to quaternary structure, interacts with GraX.

It is found in the cell membrane. It catalyses the reaction ATP + protein L-histidine = ADP + protein N-phospho-L-histidine.. Functionally, member of the two-component regulatory system GraR/GraS involved in resistance against cationic antimicrobial peptides (CAMPs). Functions as a sensor protein kinase which phosphorylates GraR through the auxiliary protein GraX. In turn, GraR up-regulates many genes such as adhesins, exoproteins, transporters, toxins, and proteins involved in cell wall synthesis. Down-regulates the expression of many genes involved in RNA and amino acid synthesis or glycolysis. This is Sensor protein kinase GraS (graS) from Staphylococcus aureus (strain MRSA252).